A 179-amino-acid polypeptide reads, in one-letter code: Large ribosomal subunit protein uL5 (179 aa).

The protein belongs to the universal ribosomal protein uL5 family. In terms of assembly, part of the 50S ribosomal subunit; part of the 5S rRNA/L5/L18/L25 subcomplex. Contacts the 5S rRNA and the P site tRNA. Forms a bridge to the 30S subunit in the 70S ribosome.

This is one of the proteins that bind and probably mediate the attachment of the 5S RNA into the large ribosomal subunit, where it forms part of the central protuberance. In the 70S ribosome it contacts protein S13 of the 30S subunit (bridge B1b), connecting the 2 subunits; this bridge is implicated in subunit movement. Contacts the P site tRNA; the 5S rRNA and some of its associated proteins might help stabilize positioning of ribosome-bound tRNAs. This is Large ribosomal subunit protein uL5 from Nitrosomonas eutropha (strain DSM 101675 / C91 / Nm57).